The primary structure comprises 588 residues: uncharacterized protein (588 aa).

A run of 7 helical transmembrane segments spans residues 14-34 (FLLFLPYFIGLLFLGFIKGIV), 49-69 (AVILSLLPVHIVWTFYSIVSA), 78-98 (IFLCLCLPAAIILWPIVGILG), 184-204 (ALVVSVLGILVDPPVISLVAI), 235-255 (VPIAGLAILLWPLAVTGAVIG), 257-274 (VISSIFLGAYAGVVSYQE), and 275-292 (SSFYYGLCYIVASVSIYD). S486 carries the phosphoserine modification. Residues 566-588 (RKGSVNGSDQESQKGVSRNVDIV) form a disordered region. A compositionally biased stretch (polar residues) spans 570–581 (VNGSDQESQKGV).

It is found in the membrane. This is an uncharacterized protein from Arabidopsis thaliana (Mouse-ear cress).